We begin with the raw amino-acid sequence, 408 residues long: Broad specificity amino-acid racemase (408 aa).

The signal sequence occupies residues 1-21 (MHKKTLLATLILGLLAGQAVA). The cysteines at positions 70 and 96 are disulfide-linked. The active-site Proton acceptor is the Lys-74. Lys-74 is modified (N6-(pyridoxal phosphate)lysine). Position 173 (Arg-173) interacts with substrate. Tyr-300 acts as the Proton acceptor in catalysis. Met-348 lines the substrate pocket.

The protein belongs to the alanine racemase family. Bsr subfamily. Homodimer. Pyridoxal 5'-phosphate serves as cofactor.

It localises to the periplasm. The catalysed reaction is an L-alpha-amino acid = a D-alpha-amino acid. The enzyme catalyses L-lysine = D-lysine. It carries out the reaction L-arginine = D-arginine. It catalyses the reaction L-alanine = D-alanine. The catalysed reaction is L-serine = D-serine. The enzyme catalyses L-methionine = D-methionine. It carries out the reaction L-leucine = D-leucine. It catalyses the reaction L-cysteine = D-cysteine. The catalysed reaction is L-glutamine = D-glutamine. The enzyme catalyses L-asparagine = D-asparagine. It carries out the reaction L-histidine = D-histidine. In terms of biological role, amino-acid racemase able to utilize a broad range of substrates. Reversibly racemizes ten of the 19 natural chiral amino acids known, including both non-beta-branched aliphatic amino acids (Ala, Leu, Met, Ser, Cys, Gln and Asn) and positively charged amino acids (His, Lys and Arg). Is not active on negatively charged (Glu and Asp) or aromatic (Tyr, Trp and Phe) amino acids and displays minimal activity towards beta-branched aliphatic (Ile, Val and Thr) substrates. Enables bacteria to produce and release extracellular non-canonical D-amino acids (NCDAAs) that regulate diverse cellular processes. The chain is Broad specificity amino-acid racemase from Aeromonas hydrophila subsp. hydrophila (strain ATCC 7966 / DSM 30187 / BCRC 13018 / CCUG 14551 / JCM 1027 / KCTC 2358 / NCIMB 9240 / NCTC 8049).